Reading from the N-terminus, the 84-residue chain is Toxin Aah4 (84 aa).

The signal sequence occupies residues 1 to 19 (MNYLIMFSLALLLVIGVES). In terms of domain architecture, LCN-type CS-alpha/beta spans 21–82 (RDGYIVDSKN…PIKDPSDDCH (62 aa)). 4 disulfide bridges follow: Cys31/Cys81, Cys35/Cys53, Cys39/Cys63, and Cys43/Cys65. A propeptide (removed by a carboxypeptidase) is located at residue Arg84.

This sequence belongs to the long (4 C-C) scorpion toxin superfamily. Sodium channel inhibitor family. Alpha subfamily. As to expression, expressed by the venom gland.

Its subcellular location is the secreted. Alpha toxins bind voltage-independently at site-3 of sodium channels (Nav) and inhibit the inactivation of the activated channels, thereby blocking neuronal transmission. This toxin seems to specifically act on Nav1.6/SCN8A sodium channel. In vitro, it inhibits the proliferation of the prostate cancer cell line DU145 (IC(50)=15 uM). It shows low effect on the adhesion of DU145 cells to fibronectin (at 15 uM) and is inactive on DU145 cells migration. The polypeptide is Toxin Aah4 (Androctonus australis (Sahara scorpion)).